The following is a 354-amino-acid chain: Holliday junction branch migration complex subunit RuvB (354 aa).

Residues 1-22 form a disordered region; sequence MTIQTDDFAPAPPRVVSAAPAS. Positions 5–193 are large ATPase domain (RuvB-L); that stretch reads TDDFAPAPPR…FGIVARLEFY (189 aa). Residues leucine 32, arginine 33, glycine 74, lysine 77, threonine 78, threonine 79, 140-142, arginine 183, tyrosine 193, and arginine 230 contribute to the ATP site; that span reads EDY. A Mg(2+)-binding site is contributed by threonine 78. Positions 194–264 are small ATPAse domain (RuvB-S); sequence TPEELALIVR…IAHKALVMLD (71 aa). The tract at residues 267–354 is head domain (RuvB-H); that stretch reads PQGFDLMDRK…RSDGQDLFGI (88 aa). 3 residues coordinate DNA: arginine 303, arginine 322, and arginine 327.

The protein belongs to the RuvB family. In terms of assembly, homohexamer. Forms an RuvA(8)-RuvB(12)-Holliday junction (HJ) complex. HJ DNA is sandwiched between 2 RuvA tetramers; dsDNA enters through RuvA and exits via RuvB. An RuvB hexamer assembles on each DNA strand where it exits the tetramer. Each RuvB hexamer is contacted by two RuvA subunits (via domain III) on 2 adjacent RuvB subunits; this complex drives branch migration. In the full resolvosome a probable DNA-RuvA(4)-RuvB(12)-RuvC(2) complex forms which resolves the HJ.

Its subcellular location is the cytoplasm. It carries out the reaction ATP + H2O = ADP + phosphate + H(+). The RuvA-RuvB-RuvC complex processes Holliday junction (HJ) DNA during genetic recombination and DNA repair, while the RuvA-RuvB complex plays an important role in the rescue of blocked DNA replication forks via replication fork reversal (RFR). RuvA specifically binds to HJ cruciform DNA, conferring on it an open structure. The RuvB hexamer acts as an ATP-dependent pump, pulling dsDNA into and through the RuvAB complex. RuvB forms 2 homohexamers on either side of HJ DNA bound by 1 or 2 RuvA tetramers; 4 subunits per hexamer contact DNA at a time. Coordinated motions by a converter formed by DNA-disengaged RuvB subunits stimulates ATP hydrolysis and nucleotide exchange. Immobilization of the converter enables RuvB to convert the ATP-contained energy into a lever motion, pulling 2 nucleotides of DNA out of the RuvA tetramer per ATP hydrolyzed, thus driving DNA branch migration. The RuvB motors rotate together with the DNA substrate, which together with the progressing nucleotide cycle form the mechanistic basis for DNA recombination by continuous HJ branch migration. Branch migration allows RuvC to scan DNA until it finds its consensus sequence, where it cleaves and resolves cruciform DNA. The sequence is that of Holliday junction branch migration complex subunit RuvB from Variovorax paradoxus (strain S110).